Here is a 224-residue protein sequence, read N- to C-terminus: Myogenin (224 aa).

Phosphoserine; by CaMK2G occurs at positions 77 and 79. The bHLH domain occupies 81–132; the sequence is DRRRAATLREKRRLKKVNEAFEALKRSTLLNPNQRLPKVEILRSAIQYIERL. The residue at position 87 (T87) is a Phosphothreonine; by CaMK2G.

Homodimer and heterodimer with E12; heterodimerization enhances MYOG DNA-binding and transcriptional activities. Interacts with SMARCA4/BRG1/BAF190A. Interacts (via C-terminal region) with SSRP1 and SUPT16H; the interaction is indicative of an interaction with the FACT complex. nteracts with CSRP3. Phosphorylated by CAMK2G on threonine and serine amino acids in a muscle activity-dependent manner. Phosphorylation of Thr-87 impairs both DNA-binding and trans-activation functions in contracting muscles. In terms of tissue distribution, expressed in myoblast cells. Expressed weakly in myotubes (at protein level). Expressed strongly in denervated muscles and in satellite cells isolated from denervated muscles. Expressed weakly in innervated muscle and in satellite cells isolated from innervated muscles.

The protein resides in the nucleus. Functionally, acts as a transcriptional activator that promotes transcription of muscle-specific target genes and plays a role in muscle differentiation, cell cycle exit and muscle atrophy. Essential for the development of functional embryonic skeletal fiber muscle differentiation. However is dispensable for postnatal skeletal muscle growth; phosphorylation by CAMK2G inhibits its transcriptional activity in respons to muscle activity. Required for the recruitment of the FACT complex to muscle-specific promoter regions, thus promoting gene expression initiation. During terminal myoblast differentiation, plays a role as a strong activator of transcription at loci with an open chromatin structure previously initiated by MYOD1. Together with MYF5 and MYOD1, co-occupies muscle-specific gene promoter core regions during myogenesis. Also cooperates with myocyte-specific enhancer factor MEF2D and BRG1-dependent recruitment of SWI/SNF chromatin-remodeling enzymes to alter chromatin structure at myogenic late gene promoters. Facilitates cell cycle exit during terminal muscle differentiation through the up-regulation of miR-20a expression, which in turn represses genes involved in cell cycle progression. Binds to the E-box containing (E1) promoter region of the miR-20a gene. Also plays a role in preventing reversal of muscle cell differentiation. Contributes to the atrophy-related gene expression in adult denervated muscles. Induces fibroblasts to differentiate into myoblasts. In Mus musculus (Mouse), this protein is Myogenin (Myog).